The following is a 1806-amino-acid chain: Focadhesin (1806 aa).

Residues 733-760 (ARPIPKQPEVEDEVKQNEEENEEEEDIS) are disordered.

Its subcellular location is the cell junction. The protein localises to the focal adhesion. It localises to the cytoplasm. The protein resides in the cytosol. Functionally, required for the maintenance of SKIC2 and SKIC3 proteostatic levels in the liver. May be involved in the regulation of RNA degradation by the exosome complex. This is Focadhesin (focad) from Danio rerio (Zebrafish).